Reading from the N-terminus, the 313-residue chain is Protein-methionine-sulfoxide reductase catalytic subunit MsrP (313 aa).

A signal peptide (tat-type signal) is located at residues 1 to 44 (MARWRPDTAEREATPEALYLRRREFLALGAAGAVGLLLPRGARA). Mo-molybdopterin contacts are provided by residues Asn-76, 79 to 80 (YE), Cys-134, Thr-169, Asn-217, Arg-222, and 233 to 235 (GAK).

It belongs to the MsrP family. In terms of assembly, heterodimer of a catalytic subunit (MsrP) and a heme-binding subunit (MsrQ). Mo-molybdopterin serves as cofactor. Post-translationally, predicted to be exported by the Tat system. The position of the signal peptide cleavage has not been experimentally proven.

The protein localises to the periplasm. The enzyme catalyses L-methionyl-[protein] + a quinone + H2O = L-methionyl-(S)-S-oxide-[protein] + a quinol. It catalyses the reaction L-methionyl-[protein] + a quinone + H2O = L-methionyl-(R)-S-oxide-[protein] + a quinol. Its function is as follows. Part of the MsrPQ system that repairs oxidized periplasmic proteins containing methionine sulfoxide residues (Met-O), using respiratory chain electrons. Thus protects these proteins from oxidative-stress damage caused by reactive species of oxygen and chlorine generated by the host defense mechanisms. MsrPQ is essential for the maintenance of envelope integrity under bleach stress, rescuing a wide series of structurally unrelated periplasmic proteins from methionine oxidation. The catalytic subunit MsrP is non-stereospecific, being able to reduce both (R-) and (S-) diastereoisomers of methionine sulfoxide. The chain is Protein-methionine-sulfoxide reductase catalytic subunit MsrP from Anaeromyxobacter dehalogenans (strain 2CP-C).